We begin with the raw amino-acid sequence, 224 residues long: Zinc finger protein 22 (224 aa).

The disordered stretch occupies residues 1–34 (MRLAKPKAGISRSSSQGKAYENKRKTGRQRQKWG). 2 positions are modified to N6-acetyllysine: lysine 18 and lysine 23. Serine 49 carries the post-translational modification Phosphoserine. 5 consecutive C2H2-type zinc fingers follow at residues 55–77 (YKCT…QKIH), 83–105 (HKCA…RRIH), 111–133 (YKCD…QRIH), 139–161 (YQCD…QRTH), and 167–189 (YQCS…MKVH).

This sequence belongs to the krueppel C2H2-type zinc-finger protein family. In the embryo, expressed in developing craniofacial structures including dental epithelium of maxillary molar tooth organs, tongue epithelium and muscle, and craniofacial bone osteoblasts. In the adult, expressed in mesoderm-derived tissues such as skeletal muscle, heart, kidney and liver. Intermediate expression in spleen, thymus and brain. Low levels in endoderm-derived tissues such as intestine and colon.

It localises to the nucleus. In terms of biological role, binds DNA through the consensus sequence 5'-CAATG-3'. May be involved in transcriptional regulation and may play a role in tooth formation. The polypeptide is Zinc finger protein 22 (ZNF22) (Homo sapiens (Human)).